A 238-amino-acid polypeptide reads, in one-letter code: Sugar fermentation stimulation protein homolog (238 aa).

Belongs to the SfsA family.

This Vibrio vulnificus (strain CMCP6) protein is Sugar fermentation stimulation protein homolog.